The chain runs to 706 residues: Triadin (706 aa).

The disordered stretch occupies residues 1–28 (MTEITAEGNASTTTTVIDSKNGSVPKSP). Topologically, residues 1-47 (MTEITAEGNASTTTTVIDSKNGSVPKSPGKVLKRTVTEDLVTTFSSP) are cytoplasmic. Residues 8-24 (GNASTTTTVIDSKNGSV) show a composition bias toward polar residues. The chain crosses the membrane as a helical span at residues 48 to 68 (AAWLLVIALIITWSAVAVVMF). The Lumenal segment spans residues 69-706 (DLVDYKNFSA…GKPNSPGPKQ (638 aa)). N-linked (GlcNAc...) asparagine glycosylation is present at Asn75. Residues 117-127 (DGDEEDDEGDE) are compositionally biased toward acidic residues. Disordered regions lie at residues 117–265 (DGDE…EQKD), 281–663 (DLKP…KKQK), and 684–706 (FPVT…GPKQ). Basic and acidic residues-rich tracts occupy residues 128–254 (DTAK…ESKE), 309–358 (PEEK…KSPD), 372–432 (TKKD…KEEV), 443–518 (AKKE…EVKP), 525–552 (IKKE…EKVL), 570–588 (KKAE…DKPK), and 599–621 (ESGK…RESH). N-linked (GlcNAc...) asparagine glycosylation occurs at Asn625. The segment covering 628–651 (KAEKPARGSKEGFEDVPASKKAKE) has biased composition (basic and acidic residues).

Interacts with CASQ2. Homooligomer of variable subunit number; disulfide-linked. Interacts with CASQ1 and RYR1 in skeletal muscle. Phosphorylated by CaMK2. In terms of processing, N-glycosylated. Detected in skeletal muscle and in heart (at protein level). Detected in skeletal muscle and in heart.

It is found in the sarcoplasmic reticulum membrane. In terms of biological role, contributes to the regulation of lumenal Ca2+ release via the sarcoplasmic reticulum calcium release channels RYR1 and RYR2, a key step in triggering skeletal and heart muscle contraction. Required for normal organization of the triad junction, where T-tubules and the sarcoplasmic reticulum terminal cisternae are in close contact. Required for normal skeletal muscle strength. Plays a role in excitation-contraction coupling in the heart and in regulating the rate of heart beats. The protein is Triadin (TRDN) of Oryctolagus cuniculus (Rabbit).